A 308-amino-acid polypeptide reads, in one-letter code: Acetyl-coenzyme A carboxylase carboxyl transferase subunit beta (308 aa).

A CoA carboxyltransferase N-terminal domain is found at 46 to 308 (LWVKCPDTGE…LMMGRGLKAA (263 aa)).

The protein belongs to the AccD/PCCB family. Acetyl-CoA carboxylase is a heterohexamer composed of biotin carboxyl carrier protein (AccB), biotin carboxylase (AccC) and two subunits each of ACCase subunit alpha (AccA) and ACCase subunit beta (AccD).

The protein resides in the cytoplasm. It carries out the reaction N(6)-carboxybiotinyl-L-lysyl-[protein] + acetyl-CoA = N(6)-biotinyl-L-lysyl-[protein] + malonyl-CoA. It participates in lipid metabolism; malonyl-CoA biosynthesis; malonyl-CoA from acetyl-CoA: step 1/1. In terms of biological role, component of the acetyl coenzyme A carboxylase (ACC) complex. Biotin carboxylase (BC) catalyzes the carboxylation of biotin on its carrier protein (BCCP) and then the CO(2) group is transferred by the transcarboxylase to acetyl-CoA to form malonyl-CoA. This is Acetyl-coenzyme A carboxylase carboxyl transferase subunit beta from Caulobacter sp. (strain K31).